A 262-amino-acid polypeptide reads, in one-letter code: Zinc import ATP-binding protein ZnuC (262 aa).

The ABC transporter domain occupies 5-220; the sequence is IELQDICVDF…PSYLAMFGHR (216 aa). 37 to 44 is an ATP binding site; it reads GPNGAGKS.

This sequence belongs to the ABC transporter superfamily. Zinc importer (TC 3.A.1.15.5) family. In terms of assembly, the complex is composed of two ATP-binding proteins (ZnuC), two transmembrane proteins (ZnuB) and a solute-binding protein (ZnuA).

Its subcellular location is the cell inner membrane. The catalysed reaction is Zn(2+)(out) + ATP(in) + H2O(in) = Zn(2+)(in) + ADP(in) + phosphate(in) + H(+)(in). Its function is as follows. Part of the ABC transporter complex ZnuABC involved in zinc import. Responsible for energy coupling to the transport system. This is Zinc import ATP-binding protein ZnuC from Vibrio cholerae serotype O1 (strain ATCC 39315 / El Tor Inaba N16961).